The following is a 3135-amino-acid chain: MKKIITLKNLFLIILVYIFSEKKDLRCNVIKGNNIKDDEDKRFHLFYYSHNLFKTPETKEKKNKKECFYKNGGIYNLSKEIRMRKDTSVKIKQRTCPFHKEGSSFEMGSKNITCFYPIVGKKERKTLDTIIIKKNVTNDHVVSSDMHSNVQEKNMILIRNIDKENKNDIQNVEEKIQRDTYENKDYESDDTLIEWFDDNTNEENFLLTFLKRCLMKIFSSPKRKKTVVQKKHKSNFFINSSLKYIYMYLTPSDSFNLVRRNRNLDEEDMSPRDNFVIDDEEEEEEEEEEEEEEEEEEEEEEEEEYDDYVYEESGDETEEQLQEEHQEEVGAESSEESFNDEDEDSVEARDGDMIRVDEYYEDQDGDTYDSTIKNEDVDEEVGEEVGEEVGEEVGEEVGEEVGEEVGEEVGEEVGEEEGEEVGEGVGEEVGEEEGEEVGEEEGEYVDEKERQGEIYPFGDEEEKDEGGESFTYEKSEVDKTDLFKFIEGGEGDDVYKVDGSKVLLDDDTISRVSKKHTARDGEYGEYGEAVEDGENVIKIIRSVLQSGALPSVGVDELDKIDLSYETTESGDTAVSEDSYDKYASNNTNKEYVCDFTDQLKPTESGPKVKKCEVKVNEPLIKVKIICPLKGSVEKLYDNIEYVPKKSPYVVLTKEETKLKEKLLSKLIYGLLISPTVNEKENNFKEGVIEFTLPPVVHKATVFYFICDNSKTEDDNKKGNRGIVEVYVEPYGNKINGCAFLDEDEEEEKYGNQIEEDEHNEKIKMKTFFTQNIYKKNNIYPCYMKLYSGDIGGILFPKNIKSTTCFEEMIPYNKEIKWNKENKSLGNLVNNSVVYNKEMNAKYFNVQYVHIPTSYKDTLNLFCSIILKEEESNLISTSYLVYVSINEELNFSLFDFYESFVPIKKTIQVAQKNVNNKEHDYTCDFTDKLDKTVPSTANGKKLFICRKHLKEFDTFTLKCNVNKTQYPNIEIFPKTLKDKKEVLKLDLDIQYQMFSKFFKFNTQNAKYLNLYPYYLIFPFNHIGKKELKNNPTYKNHKDVKYFEQSSVLSPLSSADSLGKLLNFLDTQETVCLTEKIRYLNLSINELGSDNNTFSVTFQVPPYIDIKEPFYFMFGCNNNKGEGNIGIVELLISKQEEKIKGCNFHESKLDYFNENISSDTHECTLHAYENDIIGFNCLETTHPNEVEVEVEDAEIYLQPENCFNNVYKGLNSVDITTILKNAQTYNINNKKTPTFLKIPPYNLLEDVEISCQCTIKQVVKKIKVIITKNDTVLLKREVQSESTLDDKIYKCEHENFINPRVNKTFDENVEYTCNIKIENFFNYIQIFCPAKDLGIYKNIQMYYDIVKPTRVPQFKKFNNEELHKLIPNSEMLHKTKEMLILYNEEKVDLLHFYVFLPIYIKDIYEFNIVCDNSKTMWKNQLGGKVIYHITVSKREQKVKGCSFDNEHAHMFSYNKTNVKNCIIDAKPKDLIGFVCPSGTLKLTNCFKDAIVHTNLTNINGILYLKNNLANFTYKHQFNYMEIPALMDNDISFKCICVDLKKKKYNVKSPLGPKVLRALYKKLNIKFDNYVTGTDQNKYLMTYMDLHLSHKRNYLKELFHDLGKKKPADTDANPESIIESLSINESNESGPFPTGDVDAEHLILEGYDTWESLYDEQLEEVIYNDIESLELKDIEQYVLQVNLKAPKLMMSAQIHNNRHVCDFSKNNLIVPESLKKKEELGGNPVNIHCYALLKPLDTLYVKCPTSKDNYEAAKVNISENDNEYELQVISLIEKRFHNFETLESKKPGNGDVVVHNGVVDTGPVLDNSTFEKYFKNIKIKPDKFFEKVINEYDDTEEEKDLESILPGAIVSPMKVLKKKDPFTSYAAFVVPPIVPKDLHFKVECNNTEYKDENQYISGYNGIIHIDISNSNRKINGCDFSTNNSSILTSSVKLVNGETKNCEININNNEVFGIICDNETNLDPEKCFHEIYSKDNKTVKKFREVIPNIDIFSLHNSNKKKVAYAKVPLDYINKLLFSCSCKTSHTNTIGTMKVTLNKDEKEEEDFKTAQGIKHNNVHLCNFFDNPELTFDNNKIVLCKIDAELFSEVIIQLPIFGTKNVEEGVQNEEYKKFSLKPSLVFDDNNNDIKVIGKEKNEVSISLALKGVYGNRIFTFDKNGKKGEGISFFIPPIKQDTDLKFIINETIDNSNIKQRGLIYIFVRKNVSENSFKLCDFTTGSTSLMELNSQVKEKKCTVKIKKGDIFGLKCPKGFAIFPQACFSNVLLEYYKSDYEDSEHINYYIHKDKKYNLKPKDVIELMDENFRELQNIQQYTGISNITDVLHFKNFNLGNLPLNFKNHYSTAYAKVPDTFNSIINFSCNCYNPEKHVYGTMQVESDNRNFDNIKKNENVIKNFLLPNIEKYALLLDDEERQKKIKQQQEEEQQEQILKDQDDRLSRHDDYNKNHTYILYDSNEHICDYEKNESLISTLPNDTKKIQKSICKINAKALDVVTIKCPHTKNFTPKDYFPNSSLITNDKKIVITFDKKNFVTYIDPTKKTFSLKDIYIQSFYGVSLDHLNQIKKIHEEWDDVHLFYPPHNVLHNVVLNNHIVNLSSALEGVLFMKSKVTGDETATKKNTTLPTDGVSSILIPPYVKEDITFHLFCGKSTTKKPNKKNTSLALIHIHISSNRNIIHGCDFLYLENQTNDAISNNNNNSYSIFTHNKNTENNLICDISLIPKTVIGIKCPNKKLNPQTCFDEVYYVKQEDVPSKTITADKYNTFSKDKIGNILKNAISINNPDEKDNTYTYLILPEKFEEELIDTKKVLACTCDNKYIIHMKIEKSTMDKIKIDEKKTIGKDICKYDVTTKVATCEIIDTIDSSVLKEHHTVHYSITLSRWDKLIIKYPTNEKTHFENFFVNPFNLKDKVLYNYNKPINIEHILPGAITTDIYDTRTKIKQYILRIPPYVHKDIHFSLEFNNSLSLTKQNQNIIYGNVAKIFIHINQGYKEIHGCDFTGKYSHLFTYSKKPLPNDDDICNVTIGNNTFSGFACLSHFELKPNNCFSSVYDYNEANKVKKLFDLSTKVELDHIKQNTSGYTLSYIIFNKESTKLKFSCTCSSNYSNYTIRITFDPNYIIPEPQSRAIIKYVDLQDKNFAKYLRKL.

A signal peptide spans 1-20 (MKKIITLKNLFLIILVYIFS). 4 N-linked (GlcNAc...) asparagine glycosylation sites follow: N76, N111, N135, and N239. Residues 266-470 (EEDMSPRDNF…EEKDEGGESF (205 aa)) are disordered. Acidic residues-rich tracts occupy residues 276 to 321 (VIDD…EEQL) and 329 to 345 (VGAE…DEDS). A compositionally biased stretch (basic and acidic residues) spans 346–358 (VEARDGDMIRVDE). Composition is skewed to acidic residues over residues 376-444 (DVDE…EGEY) and 458-467 (GDEEEKDEGG). N585 carries N-linked (GlcNAc...) asparagine glycosylation. 6-Cys domains lie at 589–730 (KEYV…VEPY) and 733–887 (KING…INEE). Cystine bridges form between C593-C611, C626-C706, C737-C781, and C804-C862. N-linked (GlcNAc...) asparagine glycans are attached at residues N821, N829, N889, N961, N1079, N1089, and N1153. 4 consecutive 6-Cys domains span residues 918-1133 (HDYT…ISKQ), 1136-1275 (KIKG…LKRE), 1285-1432 (KIYK…VSKR), and 1435-1560 (KVKG…YKKL). Disulfide bonds link C1140–C1161, C1175–C1251, and C1200–C1249. N-linked (GlcNAc...) asparagine glycans are attached at residues N1267, N1300, N1452, N1492, N1508, N1621, and N1624. 3 cysteine pairs are disulfide-bonded: C1439-C1459, C1473-C1534, and C1483-C1532. 6-Cys domains are found at residues 1694 to 1907 (NRHV…ISNS), 1910 to 2035 (KING…LNKD), 2052 to 2199 (NVHL…VRKN), and 2204 to 2374 (SFKL…SDNR). Disulfide bonds link C1698/C1726 and C1740/C1881. Residues N1753, N1804, N1882, N1920, N1954, and N1972 are each glycosylated (N-linked (GlcNAc...) asparagine). 4 cysteine pairs are disulfide-bonded: C1914–C1938, C1952–C2017, C1963–C2015, and C2056–C2074. 2 N-linked (GlcNAc...) asparagine glycosylation sites follow: N2178 and N2199. Disulfide bonds link C2208-C2229, C2243-C2356, and C2254-C2354. N-linked (GlcNAc...) asparagine glycosylation is found at N2312 and N2351. The interval 2410-2432 (IKQQQEEEQQEQILKDQDDRLSR) is disordered. Over residues 2422-2432 (ILKDQDDRLSR) the composition is skewed to basic and acidic residues. Residues N2439, N2457, N2466, N2504, N2586, N2611, N2650, N2677, and N2688 are each glycosylated (N-linked (GlcNAc...) asparagine). 6-Cys domains follow at residues 2448 to 2663 (NEHI…ISSN), 2666 to 2827 (IIHG…IDEK), 2831 to 2979 (GKDI…INQG), and 2982 to 3113 (EIHG…PEPQ). Intrachain disulfides connect C2452–C2476 and C2490–C2638. 3 disulfides stabilise this stretch: C2670-C2706, C2720-C2804, and C2730-C2802. N2952 is a glycosylation site (N-linked (GlcNAc...) asparagine). A disulfide bond links C2986 and C3010. N3011, N3016, N3066, N3093, and N3096 each carry an N-linked (GlcNAc...) asparagine glycan. 2 disulfides stabilise this stretch: C3024-C3090 and C3035-C3088.

As to quaternary structure, heterodimer; heterodimerizes with PF45/48. In terms of processing, may be processed into a 310 kDa form as the parasite emerges from the host erythrocytes.

Its subcellular location is the cell surface. The protein localises to the cell membrane. Its function is as follows. Gametocyte surface protein required for male/female gamete fusion. Also required for male gamete exflagellation and interaction with host erythrocytes. The sequence is that of Gametocyte surface protein P230 (PFS230) from Plasmodium falciparum (isolate 3D7).